The following is a 68-amino-acid chain: DNA-directed RNA polymerase subunit omega (68 aa).

It belongs to the RNA polymerase subunit omega family. The RNAP catalytic core consists of 2 alpha, 1 beta, 1 beta' and 1 omega subunit. When a sigma factor is associated with the core the holoenzyme is formed, which can initiate transcription.

The enzyme catalyses RNA(n) + a ribonucleoside 5'-triphosphate = RNA(n+1) + diphosphate. Its function is as follows. Promotes RNA polymerase assembly. Latches the N- and C-terminal regions of the beta' subunit thereby facilitating its interaction with the beta and alpha subunits. The protein is DNA-directed RNA polymerase subunit omega of Dechloromonas aromatica (strain RCB).